The primary structure comprises 439 residues: Glucose-1-phosphate adenylyltransferase (439 aa).

Alpha-D-glucose 1-phosphate-binding positions include Gly-172, 187–188 (EK), and Ser-219.

This sequence belongs to the bacterial/plant glucose-1-phosphate adenylyltransferase family. Homotetramer.

It catalyses the reaction alpha-D-glucose 1-phosphate + ATP + H(+) = ADP-alpha-D-glucose + diphosphate. It functions in the pathway glycan biosynthesis; glycogen biosynthesis. Functionally, involved in the biosynthesis of ADP-glucose, a building block required for the elongation reactions to produce glycogen. Catalyzes the reaction between ATP and alpha-D-glucose 1-phosphate (G1P) to produce pyrophosphate and ADP-Glc. The protein is Glucose-1-phosphate adenylyltransferase of Synechocystis sp. (strain ATCC 27184 / PCC 6803 / Kazusa).